The primary structure comprises 296 residues: Cleavage and polyadenylation specificity factor subunit 4 (296 aa).

5 C3H1-type zinc fingers span residues 35-63, 64-91, 92-119, 120-147, and 149-171; these read KSIAAVCNFITRNGQECDKGSACPFRHIR, GDRTIVCKHWLRGLCKKGDQCEFLHEYD, MTKMPECYFYSRFNACHNKECPFLHIDP, QSKVKDCPWYKRGFCRHGPHCRHQHLRR, and LCMDYLAGFCPEGPSCKHMHPHF. The CCHC-type 1 zinc-finger motif lies at 189–206; it reads PTCHYCGELGHKANSCKQ. Residues 222-254 are disordered; sequence HSGGHSGGYSGHSGHIEGADDMQSNHHSQPHGP. The segment at 266-283 adopts a CCHC-type 2 zinc-finger fold; that stretch reads ITCYKCGNKGHYANKCPK.

In terms of assembly, component of the cleavage and polyadenylation specificity factor (CPSF) complex, composed of at least Clp, Cpsf73, Cpsf100 and Cpsf160. As to expression, during oogenesis, expression is detected in the germarium, in nurse cells, in the oocyte, and in the somatically derived follicular epithelial cells (at protein level). At oogenesis stage 12, nurse cells degenerate and their content is transferred into the oocyte. In larvae, expressed in all organs and disks (at protein level). In the larval salivary gland, expression is initially confined to cells at the anterior end but later expands throughout the entire gland (at protein level).

The protein resides in the nucleus. Its function is as follows. Component of the cleavage and polyadenylation specificity factor (CPSF) complex that plays a key role in pre-mRNA 3'-end formation, recognizing the AAUAAA signal sequence and interacting with poly(A) polymerase and other factors to bring about cleavage and poly(A) addition. Has endonuclease activity. Binds RNA polymers with a preference for G- and/or C-rich clusters. Binds single-stranded DNA non-specifically. This is Cleavage and polyadenylation specificity factor subunit 4 (Clp) from Drosophila melanogaster (Fruit fly).